We begin with the raw amino-acid sequence, 203 residues long: Endoplasmic reticulum transmembrane protein 3 (203 aa).

Over 1–6 (MSLYYT) the chain is Lumenal. A helical transmembrane segment spans residues 7-27 (LVFAILVVEIFMFSILALPIP). Topologically, residues 28 to 45 (SRYRRPLTLLLLKPFKSS) are cytoplasmic. Residues 46 to 66 (TVQVAIKCVLGFILLLFIDCI) traverse the membrane as a helical segment. At 67 to 110 (NRVYSIDKELQLSSASQNNGAIIAQDRIEVLSRKFFAQRNMYLT) the chain is on the lumenal side. The chain crosses the membrane as a helical span at residues 111–131 (GITLFLTFVVVRTFGLVIELL). The Cytoplasmic segment spans residues 132 to 203 (TMKDIYRASP…KSESLQEEIN (72 aa)). Residues 142–171 (PVASSDVKKNDSVTAEAAAQSGASKDDHGD) form a disordered region.

Belongs to the BCAP29/BCAP31 family.

The protein resides in the endoplasmic reticulum membrane. May play a role in anterograde transport of membrane proteins from the endoplasmic reticulum to the Golgi. May be involved in invertase secretion. This is Endoplasmic reticulum transmembrane protein 3 (YET3) from Saccharomyces cerevisiae (strain ATCC 204508 / S288c) (Baker's yeast).